Here is an 80-residue protein sequence, read N- to C-terminus: MPFQFGTQPRRFPVEGGDSSIELEPGLSSSAACNGKEMSPTRQLRRCPGSHCLTITDVPVTVYATTRKPPAQSSKEMHPK.

Residues 1-44 (MPFQFGTQPRRFPVEGGDSSIELEPGLSSSAACNGKEMSPTRQL) form a disordered region.

It belongs to the FAM229 family.

This chain is Protein FAM229B (FAM229B), found in Homo sapiens (Human).